Here is a 1083-residue protein sequence, read N- to C-terminus: Neisserial autotransporter lipoprotein NalP (1083 aa).

A signal peptide spans 1-27 (MRTTPTFPTKTFKPTAMALAVATTLSA). The N-palmitoyl cysteine moiety is linked to residue cysteine 28. Residue cysteine 28 is the site of S-diacylglycerol cysteine attachment. A Peptidase S8 domain is found at 111 to 483 (NDAYKNLINL…WGLLDAGKAM (373 aa)). Active-site charge relay system residues include aspartate 139, histidine 211, and serine 427. Residues 809–1083 (DGLDHNGTGL…SGRVGVGYRF (275 aa)) form the Autotransporter domain. 12 consecutive transmembrane segments (beta stranded) span residues 819–828 (RVIAQTQQDG), 844–852 (TQTVGIAAK), 858–866 (TAAATLGMG), 883–891 (SLFAGIRHD), 897–906 (YLKGLFSYGR), 931–941 (QLGALGGVNVP), 948–958 (LTVEGGLRYDL), 984–994 (VGLAGLKLSQP), 1000–1010 (VLFATAGVERD), 1041–1052 (RLVAGLGADVEF), 1057–1066 (NGLARYSYAG), and 1074–1083 (SGRVGVGYRF).

This sequence belongs to the peptidase S8 family. A fusion protein of the first 44 residues with beta-lactamase is lipidated in E.coli, strongly suggesting this is a lipoprotein in situ. The lipidated form is briefly retained on the cell surface which allows it to process its endogenous substrates on the cell surface before the passenger domain is released into the medium.

Its subcellular location is the cell outer membrane. The protein resides in the cell surface. It is found in the secreted. Functionally, major human immunogenic protein. Autotransporter with a secreted protease domain involved in processing other autotransporter proteins including App and IgA. Probably autoprocesses to release the about 70 kDa passenger domain. Processes the lactoferrin receptor lipoprotein subunit (LbpB) extracellularly, releasing it from the cell surface. LbpB release protects bacteria against complement-mediated killing by anti-LbpB antibodies. Processes NHBA. Lipidation slows its auto-processing, probably allowing it to act on endogenous substrates on the cell surface before the passenger domain is released into the medium. The C-terminal beta-barrel domain inserts into the outer membrane where it probably exports the N-terminal passenger domain. Both the cell surface protein (Neisserial autotransporter lipoprotein NalP) and the passenger domain cleave human (host) complement factor C3, generating a shorter alpha chain and a longer beta chain than normal. In terms of biological role, plays a role in extracellular-DNA (eDNA) mediated biofilm formation. In some strains (including cc32 strain H44/76 but not cc11 strain B16B6) eDNA stimulates biofilm formation. When NalP is not expressed (and no longer processes NHBA or IgA) biofilm formation increases. This is probably because the number of positively charged, DNA-binding peptides on the cell surface rises, resulting in increased biofilm formation. Cleaves human (host) complement factor C3, generating a shorter alpha chain and a longer beta chain than normal. Does not act on mouse or rabbit C3. Cleavage causes C3b degradation by human CFI and CFH, decreases deposition of C3b on the bacteria surface and probably facilitates complement escape. This Neisseria meningitidis serogroup B / serotype 15 (strain H44/76) protein is Neisserial autotransporter lipoprotein NalP.